A 116-amino-acid chain; its full sequence is Somatostatin (116 aa).

The signal sequence occupies residues M1 to G24. Residues L35–R88 constitute a propeptide that is removed on maturation. Residue T43 is modified to Threonine amide. Residues C105 and C116 are joined by a disulfide bond.

Belongs to the somatostatin family. Post-translationally, C-terminal amidation of the neuronostatin peptide is required for its biological activity, including for the regulation of mean arterial pressure. In the pancreas, somatostatin is expressed in delta cells of the islets of Langerhans. In the stomach, it is expressed in parietal cells of oxyntic mucosa and in the small intestine, it is found in the villus (at protein level). Neuronostatin is expressed in the pancreas in delta cells of the islets of Langerhans, as well as in the stomach, in parietal cells of oxyntic mucosa and in the small intestine, in the villus (at protein level).

Its subcellular location is the secreted. Inhibits the secretion of pituitary hormones, including that of growth hormone/somatotropin (GH1), PRL, ACTH, luteinizing hormone (LH) and TSH. Also impairs ghrelin- and GnRH-stimulated secretion of GH1 and LH; the inhibition of ghrelin-stimulated secretion of GH1 can be further increased by neuronostatin. In terms of biological role, may enhance low-glucose-induced glucagon release by pancreatic alpha cells. This effect may be mediated by binding to GPR107 and PKA activation. May regulate cardiac contractile function. May compromise cardiomyocyte viability. In the central nervous system, may impair memory retention and may affect hippocampal excitability. May also have anxiolytic and anorexigenic effects. May play a role in arterial pressure regulation. May inhibit basal, but not ghrelin- or GnRH-stimulated secretion of GH1 or LH, but does not affect the release of other pituitary hormones, including PRL, ACTH, FSH or TSH. Potentiates inhibitory action of somatostatin on ghrelin-stimulated secretion of GH1, but not that on GnRH-stimulated secretion of LH. In Mus musculus (Mouse), this protein is Somatostatin (Sst).